A 348-amino-acid chain; its full sequence is 3'-dehydrocarminate deglycosidase alpha subunit (348 aa).

E145 lines the Mg(2+) pocket. The active-site Proton acceptor is the H147. Positions 177, 275, and 311 each coordinate Mg(2+).

Belongs to the C-glycoside deglycosidase alpha subunit family. As to quaternary structure, heterodimer composed of an alpha subunit (CarB) and a beta subunit (CarC). Mg(2+) is required as a cofactor.

The catalysed reaction is 3'-dehydrocarminate + H(+) = kermesate + 1,5-anhydro-D-erythro-hex-1-en-3-ulose. Its activity is regulated as follows. Activity is strongly reduced in the presence of chelating agents. Carbon-carbon bond-cleaving enzyme which participates in a carminate degradation pathway. Cleaves the C-C bond in 3'-dehydrocarminate to form kermesate. Also shows weak activity with other C-glycosides, such as 3''-dehydropuerarin (3''-oxo-puerarin), 3''-dehydroisoorientin (3''-oxo-homoorientin) and 3'-dehydromangiferin (3'-oxo-mangiferin). The chain is 3'-dehydrocarminate deglycosidase alpha subunit from Microbacterium sp.